Here is a 31-residue protein sequence, read N- to C-terminus: Cyclotide cter-J (31 aa).

The segment at residues 1–31 is a cross-link (cyclopeptide (Gly-Asp)); that stretch reads GTVPCGESCVFIPCITGIAGCSCKNKVCYID. Intrachain disulfides connect Cys5-Cys21, Cys9-Cys23, and Cys14-Cys28.

Contains 3 disulfide bonds. In terms of processing, this is a cyclic peptide.

Its function is as follows. Probably participates in a plant defense mechanism. The chain is Cyclotide cter-J from Clitoria ternatea (Butterfly pea).